A 298-amino-acid polypeptide reads, in one-letter code: GTPase Era (298 aa).

In terms of domain architecture, Era-type G spans 3–170 (KSGFVAILGR…IKLLTDNLEE (168 aa)). Residues 11–18 (GRPNVGKS) are G1. 11-18 (GRPNVGKS) is a GTP binding site. Positions 37–41 (QTTRN) are G2. Residues 58 to 61 (DTPG) form a G3 region. Residues 58-62 (DTPGI) and 120-123 (NKID) contribute to the GTP site. Positions 120–123 (NKID) are G4. The segment at 149–151 (ISA) is G5. One can recognise a KH type-2 domain in the interval 201–279 (TQQEVPHSVA…YLETWVKVKK (79 aa)).

This sequence belongs to the TRAFAC class TrmE-Era-EngA-EngB-Septin-like GTPase superfamily. Era GTPase family. In terms of assembly, monomer.

It localises to the cytoplasm. Its subcellular location is the cell membrane. In terms of biological role, an essential GTPase that binds both GDP and GTP, with rapid nucleotide exchange. Plays a role in 16S rRNA processing and 30S ribosomal subunit biogenesis and possibly also in cell cycle regulation and energy metabolism. The protein is GTPase Era of Streptococcus pyogenes serotype M2 (strain MGAS10270).